Here is a 616-residue protein sequence, read N- to C-terminus: Coagulation factor XII (616 aa).

The first 19 residues, 1-19 (MRALLLLGILLVSLESALL), serve as a signal peptide directing secretion. Positions 42–90 (VTGEPCHFPFQYYRQLYYKCIQRGQRGPRPWCATTPNFEKDQRWAYCLE) constitute a Fibronectin type-II domain. Intrachain disulfides connect cysteine 47–cysteine 73, cysteine 61–cysteine 88, cysteine 98–cysteine 110, cysteine 104–cysteine 119, cysteine 121–cysteine 130, cysteine 135–cysteine 163, cysteine 161–cysteine 170, cysteine 178–cysteine 189, cysteine 183–cysteine 198, cysteine 200–cysteine 209, cysteine 217–cysteine 295, cysteine 238–cysteine 277, and cysteine 266–cysteine 290. In terms of domain architecture, EGF-like 1 spans 94 to 131 (VKDHCNKGNPCQKGGTCVNMPNGPHCICPDHFTGKHCQ). An O-linked (Fuc) threonine glycan is attached at threonine 109. The Fibronectin type-I domain maps to 133-173 (EKCFEPQFLQFFQENEIWHRFEPAGVSKCQCKGPKAQCKPV). The EGF-like 2 domain occupies 174–210 (ASQVCSTNPCLNGGSCLQTEGHRLCRCPTGYAGRLCD). The 80-residue stretch at 216-295 (RCYSDRGLSY…SWQYCRLARC (80 aa)) folds into the Kringle domain. N-linked (GlcNAc...) asparagine glycans are attached at residues asparagine 249, asparagine 271, and asparagine 335. Residues 303–342 (PPILTPTQSPSEHQDSPLLSREPQPTTQTPSQNLTSAWCA) are disordered. Residues 325–338 (PQPTTQTPSQNLTS) show a composition bias toward polar residues. 7 disulfides stabilise this stretch: cysteine 358–cysteine 485, cysteine 396–cysteine 412, cysteine 404–cysteine 474, cysteine 435–cysteine 438, cysteine 501–cysteine 570, cysteine 533–cysteine 549, and cysteine 560–cysteine 591. The 244-residue stretch at 372–615 (IVGGLVALPG…YLAWIQEHTT (244 aa)) folds into the Peptidase S1 domain. Residue histidine 411 is the Charge relay system of the active site. The N-linked (GlcNAc...) asparagine glycan is linked to asparagine 432. Aspartate 460 functions as the Charge relay system in the catalytic mechanism. The Charge relay system role is filled by serine 564.

This sequence belongs to the peptidase S1 family. As to quaternary structure, interacts with HRG; the interaction, which is enhanced in the presence of zinc ions and inhibited by heparin-binding, inhibits factor XII autoactivation and contact-initiated coagulation. Post-translationally, O- and N-glycosylated.

It localises to the secreted. It carries out the reaction Selective cleavage of Arg-|-Ile bonds in factor VII to form factor VIIa and factor XI to form factor XIa.. Activity is promoted in the presence of negatively charged surfaces. Factor XII is a serum glycoprotein that participates in the initiation of blood coagulation, fibrinolysis, and the generation of bradykinin and angiotensin. Prekallikrein is cleaved by factor XII to form kallikrein, which then cleaves factor XII first to alpha-factor XIIa and then trypsin cleaves it to beta-factor XIIa. Alpha-factor XIIa activates factor XI to factor XIa. In Sus scrofa (Pig), this protein is Coagulation factor XII (F12).